A 527-amino-acid polypeptide reads, in one-letter code: Peptide chain release factor 3 (527 aa).

The region spanning 11–278 is the tr-type G domain; that stretch reads AKRRTFAIIS…GFVEWAPAPL (268 aa). Residues 20–27, 87–91, and 141–144 contribute to the GTP site; these read SHPDAGKT, DTPGH, and NKMD.

This sequence belongs to the TRAFAC class translation factor GTPase superfamily. Classic translation factor GTPase family. PrfC subfamily.

The protein localises to the cytoplasm. In terms of biological role, increases the formation of ribosomal termination complexes and stimulates activities of RF-1 and RF-2. It binds guanine nucleotides and has strong preference for UGA stop codons. It may interact directly with the ribosome. The stimulation of RF-1 and RF-2 is significantly reduced by GTP and GDP, but not by GMP. The protein is Peptide chain release factor 3 of Teredinibacter turnerae (strain ATCC 39867 / T7901).